A 536-amino-acid polypeptide reads, in one-letter code: MPGFYEIVIKVPSDLDGHLPGISDSFVNWVAEKEWELPPDSDMDLNLIEQAPLTVAEKLQRDFLTEWRRVSKAPEALFFVQFEKGESYFHMHVLVETTGVKSMVLGRFLSQIREKLIQRIYRGIEPTLPNWFAVTKTRNGAGGGNKVVDECYIPNYLLPKTQPELQWAWTNMEQYLSACLNLTERKRLVAQHLTHVSQTQEQNKENQNPNSDAPVIRSKTSARYMELVGWLVDKGITSEKQWIQEDQASYISFNAASNSRSQIKAALDNAGKIMSLTKTAPDYLVGQQPVEDISSNRIYKILELNGYDPQYAASVFLGWATKKFGKRNTIWLFGPATTGKTNIAEAIAHTVPFYGCVNWTNENFPFNDCVDKMVIWWEEGKMTAKVVESAKAILGGSKVRVDQKCKSSAQIDPTPVIVTSNTNMCAVIDGNSTTFEHQQPLQDRMFKFELTRRLDHDFGKVTKQEVKDFFRWAKDHVVEVEHEFYVKKGGAKKRPAPSDADISEPKRVRESVAQPSTSDAEASINYADRLARGHSL.

In terms of domain architecture, PV NS1-Nuc spans 1–199 (MPGFYEIVIK…AQHLTHVSQT (199 aa)). Positions 83, 90, and 92 each coordinate a divalent metal cation. An RCR-2 motif is present at residues 90–92 (HMH). Tyr-156 functions as the For nuclease activity in the catalytic mechanism. The RCR-3 motif lies at 156–160 (YLLPK). The segment covering 196-211 (VSQTQEQNKENQNPNS) has biased composition (polar residues). The segment at 196–216 (VSQTQEQNKENQNPNSDAPVI) is disordered. Residues 308-463 (DPQYAASVFL…LDHDFGKVTK (156 aa)) form the SF3 helicase domain. 334 to 341 (GPATTGKT) lines the ATP pocket. The interval 488–536 (KGGAKKRPAPSDADISEPKRVRESVAQPSTSDAEASINYADRLARGHSL) is disordered.

As to quaternary structure, interacts with host TOPORS. Interacts with host KCTD5. It depends on a divalent metal cation as a cofactor.

Its subcellular location is the host nucleus. It catalyses the reaction ATP + H2O = ADP + phosphate + H(+). Functionally, plays an essential role in the initiation of viral DNA synthesis. Binds specifically to an inverted terminal repeat element (ITR) on the 3' and 5' ends of the viral DNA, where it cleaves a site specifically to generate a priming site for initiation of the synthesis of a complementary strand. Also plays a role as transcriptional regulator, DNA helicase and as key factor in site-specific integration of the viral genome. Inhibits the host cell cycle G1/S and G2/M transitions. These arrests may provide essential cellular factors for viral DNA replication. This is Protein Rep68 (Rep68) from Mammalia (AAV-2).